Here is a 190-residue protein sequence, read N- to C-terminus: Movement protein (190 aa).

Belongs to the tombusvirus/aureusvirus movement protein p22 family.

It is found in the host membrane. Its function is as follows. Transports viral genome to neighboring plant cells directly through plasmosdesmata, without any budding. The movement protein allows efficient cell to cell propagation, by bypassing the host cell wall barrier. The polypeptide is Movement protein (Cucumber necrosis virus (CNV)).